Consider the following 323-residue polypeptide: Cyclin-dependent kinase 1 (323 aa).

A Protein kinase domain is found at 4–306 (YQKIEKIGEG…AKQACMHPYF (303 aa)). ATP is bound by residues 10-18 (IGEGTYGVV) and Lys-34. The residue at position 14 (Thr-14) is a Phosphothreonine. Tyr-15 carries the phosphotyrosine modification. The Proton acceptor role is filled by Asp-147. Phosphothreonine; by CAK is present on Thr-180.

This sequence belongs to the protein kinase superfamily. CMGC Ser/Thr protein kinase family. CDC2/CDKX subfamily. Forms a stable but non-covalent complex with a regulatory subunit (SUC1) and with a cyclin.

The enzyme catalyses L-seryl-[protein] + ATP = O-phospho-L-seryl-[protein] + ADP + H(+). It catalyses the reaction L-threonyl-[protein] + ATP = O-phospho-L-threonyl-[protein] + ADP + H(+). Its activity is regulated as follows. Phosphorylation at Thr-14 or Tyr-15 inactivates the enzyme, while phosphorylation at Thr-180 activates it. In terms of biological role, cyclin-dependent kinase that acts as a master regulator of the mitotic and meiotic cell cycles. In Emericella nidulans (strain FGSC A4 / ATCC 38163 / CBS 112.46 / NRRL 194 / M139) (Aspergillus nidulans), this protein is Cyclin-dependent kinase 1.